The following is a 465-amino-acid chain: Crh-like protein ARB_05253 (465 aa).

Residues 1–21 (MKLSLAAALLGALAVSAQTST) form the signal peptide. The region spanning 22-223 (ECNPLKQKCP…WAGGETDFSK (202 aa)) is the GH16 domain. A disulfide bridge connects residues Cys23 and Cys30. The active-site Nucleophile is Glu114. Glu118 (proton donor) is an active-site residue. The chitin site is built by Glu118, Trp200, and Thr211. Disordered stretches follow at residues 261–325 (GQVN…STMT) and 339–442 (TGTG…PGST). An N-linked (GlcNAc...) asparagine glycan is attached at Asn264. Residues 277–287 (SSTLPSSPSTS) are compositionally biased toward low complexity. A compositionally biased stretch (polar residues) spans 304 to 325 (QAPNTGSSPSNTLTNGPSSTMT). Low complexity-rich tracts occupy residues 339–348 (TGTGGVVTPT), 361–376 (TSRS…SASS), and 383–397 (MTTS…TGTG). Residue Ser441 is the site of GPI-anchor amidated serine attachment. A propeptide spans 442–465 (TGAIHSVSNALLLSFCAIAAWALV) (removed in mature form).

It belongs to the glycosyl hydrolase 16 family. CRH1 subfamily. The GPI-anchor is attached to the protein in the endoplasmic reticulum and serves to target the protein to the cell surface. There, the glucosamine-inositol phospholipid moiety is cleaved off and the GPI-modified mannoprotein is covalently attached via its lipidless GPI glycan remnant to the 1,6-beta-glucan of the outer cell wall layer.

Its subcellular location is the secreted. It is found in the cell wall. The protein localises to the membrane. It carries out the reaction Random endo-hydrolysis of N-acetyl-beta-D-glucosaminide (1-&gt;4)-beta-linkages in chitin and chitodextrins.. Dual chitinase/transglycosylase that plays a role in cell wall architecture. Chitinase and transglycosylase activities are coupled. Required for the polysaccharide cross-linking at the septa and the cell wall. More specifically, transfers chitin to 1,6-beta-glucan in the cell wall. The chain is Crh-like protein ARB_05253 from Arthroderma benhamiae (strain ATCC MYA-4681 / CBS 112371) (Trichophyton mentagrophytes).